Consider the following 146-residue polypeptide: Lipoprotein signal peptidase (146 aa).

The next 3 helical transmembrane spans lie at 10-30 (GLFV…LGGF), 54-74 (FLEG…LLFL), and 80-100 (FFVA…SNIL). Residues D110 and D127 contribute to the active site. The helical transmembrane segment at 118–138 (FEFAIFNFADVMIDVAVALFL) threads the bilayer.

This sequence belongs to the peptidase A8 family.

It localises to the cell inner membrane. It catalyses the reaction Release of signal peptides from bacterial membrane prolipoproteins. Hydrolyzes -Xaa-Yaa-Zaa-|-(S,diacylglyceryl)Cys-, in which Xaa is hydrophobic (preferably Leu), and Yaa (Ala or Ser) and Zaa (Gly or Ala) have small, neutral side chains.. Its pathway is protein modification; lipoprotein biosynthesis (signal peptide cleavage). Its function is as follows. This protein specifically catalyzes the removal of signal peptides from prolipoproteins. The protein is Lipoprotein signal peptidase of Wolinella succinogenes (strain ATCC 29543 / DSM 1740 / CCUG 13145 / JCM 31913 / LMG 7466 / NCTC 11488 / FDC 602W) (Vibrio succinogenes).